The following is a 175-amino-acid chain: Hypoxanthine-guanine phosphoribosyltransferase (175 aa).

Diphosphate contacts are provided by Lys-40 and Gly-41. The Mg(2+) site is built by Glu-96 and Asp-97. Asp-100 functions as the Proton acceptor in the catalytic mechanism. GMP-binding positions include Lys-128, Phe-149–Leu-150, and Asp-156. Residue Arg-162 participates in diphosphate binding.

Belongs to the purine/pyrimidine phosphoribosyltransferase family. Requires Mg(2+) as cofactor.

It is found in the cytoplasm. It catalyses the reaction IMP + diphosphate = hypoxanthine + 5-phospho-alpha-D-ribose 1-diphosphate. The enzyme catalyses GMP + diphosphate = guanine + 5-phospho-alpha-D-ribose 1-diphosphate. The protein operates within purine metabolism; IMP biosynthesis via salvage pathway; IMP from hypoxanthine: step 1/1. Its pathway is purine metabolism; GMP biosynthesis via salvage pathway; GMP from guanine: step 1/1. Functionally, purine salvage pathway enzyme that catalyzes the transfer of the ribosyl-5-phosphate group from 5-phospho-alpha-D-ribose 1-diphosphate (PRPP) to the N9 position of the 6-oxopurines hypoxanthine and guanine to form the corresponding ribonucleotides IMP (inosine 5'-monophosphate) and GMP (guanosine 5'-monophosphate), with the release of PPi. In Mycoplasma pneumoniae (strain ATCC 29342 / M129 / Subtype 1) (Mycoplasmoides pneumoniae), this protein is Hypoxanthine-guanine phosphoribosyltransferase (hpt).